The chain runs to 188 residues: Pyridoxal 5'-phosphate synthase subunit PdxT (188 aa).

Residue 46-48 (GES) participates in L-glutamine binding. Catalysis depends on Cys-78, which acts as the Nucleophile. Residues Arg-105 and 134–135 (IR) each bind L-glutamine. Residues His-170 and Glu-172 each act as charge relay system in the active site.

Belongs to the glutaminase PdxT/SNO family. In terms of assembly, in the presence of PdxS, forms a dodecamer of heterodimers. Only shows activity in the heterodimer.

It catalyses the reaction aldehydo-D-ribose 5-phosphate + D-glyceraldehyde 3-phosphate + L-glutamine = pyridoxal 5'-phosphate + L-glutamate + phosphate + 3 H2O + H(+). It carries out the reaction L-glutamine + H2O = L-glutamate + NH4(+). It participates in cofactor biosynthesis; pyridoxal 5'-phosphate biosynthesis. Catalyzes the hydrolysis of glutamine to glutamate and ammonia as part of the biosynthesis of pyridoxal 5'-phosphate. The resulting ammonia molecule is channeled to the active site of PdxS. This is Pyridoxal 5'-phosphate synthase subunit PdxT from Thermotoga petrophila (strain ATCC BAA-488 / DSM 13995 / JCM 10881 / RKU-1).